Here is a 738-residue protein sequence, read N- to C-terminus: Conserved oligomeric Golgi complex subunit 4 (738 aa).

It belongs to the COG4 family. In terms of assembly, component of the conserved oligomeric Golgi complex which is composed of eight different subunits and is required for normal Golgi morphology and localization. Interacts with COG2 and COG3.

Its subcellular location is the golgi apparatus membrane. Its function is as follows. Required for normal Golgi function. The sequence is that of Conserved oligomeric Golgi complex subunit 4 from Arabidopsis thaliana (Mouse-ear cress).